Consider the following 176-residue polypeptide: NAD(P)H-quinone oxidoreductase subunit 6, chloroplastic (176 aa).

Transmembrane regions (helical) follow at residues 10–30, 32–52, 61–81, 92–112, and 152–172; these read FLLV…VLLT, PIFS…FFSL, AQLL…VMFM, LWTV…ISLI, and FFLP…GAIA.

This sequence belongs to the complex I subunit 6 family. As to quaternary structure, NDH is composed of at least 16 different subunits, 5 of which are encoded in the nucleus.

It localises to the plastid. It is found in the chloroplast thylakoid membrane. The enzyme catalyses a plastoquinone + NADH + (n+1) H(+)(in) = a plastoquinol + NAD(+) + n H(+)(out). The catalysed reaction is a plastoquinone + NADPH + (n+1) H(+)(in) = a plastoquinol + NADP(+) + n H(+)(out). In terms of biological role, NDH shuttles electrons from NAD(P)H:plastoquinone, via FMN and iron-sulfur (Fe-S) centers, to quinones in the photosynthetic chain and possibly in a chloroplast respiratory chain. The immediate electron acceptor for the enzyme in this species is believed to be plastoquinone. Couples the redox reaction to proton translocation, and thus conserves the redox energy in a proton gradient. The polypeptide is NAD(P)H-quinone oxidoreductase subunit 6, chloroplastic (ndhG) (Oenothera argillicola (Appalachian evening primrose)).